We begin with the raw amino-acid sequence, 394 residues long: Putative bacilysin exporter BacE (394 aa).

The next 11 membrane-spanning stretches (helical) occupy residues 11–31 (LLYGQALSFMGDYCVLPALLI), 43–63 (SGVIVVRSIPMVFQPFLGVLV), 69–89 (IKIMLWTDIIRGIIFLGLTFL), 92–112 (GEYPLIFLALLFITYGSGVFF), 142–162 (IIVGAAAGGLFLLGGSVELAV), 166–186 (GVTYLVSAFFISRIKLQFVPI), 215–235 (MFTMITMALLWGVVYSYFPIV), 244–264 (IGNFILTFCIGFGGFIGAALV), 288–308 (LFLFTPIFAVSVIAAILFFIA), 332–352 (IFSVAEASIGLCISIGSMFIN), and 353–373 (ILSAPVIMGLIVVIVCGLFLH).

It belongs to the major facilitator superfamily. Drug:H(+) antiporter-3 (DHA3) (TC 2.A.1.21) family.

The protein resides in the cell membrane. Its function is as follows. Part of the bacilysin biosynthesis operon. May be involved in self-resistance to bacilysin by permitting efflux of this antibiotic. The sequence is that of Putative bacilysin exporter BacE (bacE) from Bacillus subtilis (strain 168).